A 270-amino-acid polypeptide reads, in one-letter code: Endonuclease 4 (270 aa).

Residues His-69, His-108, Glu-139, Asp-169, His-172, His-204, Asp-217, His-219, and Glu-248 each coordinate Zn(2+).

It belongs to the AP endonuclease 2 family. The cofactor is Zn(2+).

It catalyses the reaction Endonucleolytic cleavage to 5'-phosphooligonucleotide end-products.. Functionally, endonuclease IV plays a role in DNA repair. It cleaves phosphodiester bonds at apurinic or apyrimidinic (AP) sites, generating a 3'-hydroxyl group and a 5'-terminal sugar phosphate. In addition, possesses a 3'-5' exonuclease activity. In Thermus thermophilus (strain ATCC BAA-163 / DSM 7039 / HB27), this protein is Endonuclease 4.